A 486-amino-acid chain; its full sequence is Protein nucleotidyltransferase YdiU (486 aa).

Residues Gly-89, Gly-91, Arg-92, Lys-112, Asp-124, Gly-125, Arg-175, and Arg-182 each coordinate ATP. The active-site Proton acceptor is the Asp-251. Residues Asn-252 and Asp-261 each contribute to the Mg(2+) site. Asp-261 is a binding site for ATP.

The protein belongs to the SELO family. It depends on Mg(2+) as a cofactor. Mn(2+) serves as cofactor.

The enzyme catalyses L-seryl-[protein] + ATP = 3-O-(5'-adenylyl)-L-seryl-[protein] + diphosphate. It carries out the reaction L-threonyl-[protein] + ATP = 3-O-(5'-adenylyl)-L-threonyl-[protein] + diphosphate. It catalyses the reaction L-tyrosyl-[protein] + ATP = O-(5'-adenylyl)-L-tyrosyl-[protein] + diphosphate. The catalysed reaction is L-histidyl-[protein] + UTP = N(tele)-(5'-uridylyl)-L-histidyl-[protein] + diphosphate. The enzyme catalyses L-seryl-[protein] + UTP = O-(5'-uridylyl)-L-seryl-[protein] + diphosphate. It carries out the reaction L-tyrosyl-[protein] + UTP = O-(5'-uridylyl)-L-tyrosyl-[protein] + diphosphate. Nucleotidyltransferase involved in the post-translational modification of proteins. It can catalyze the addition of adenosine monophosphate (AMP) or uridine monophosphate (UMP) to a protein, resulting in modifications known as AMPylation and UMPylation. The protein is Protein nucleotidyltransferase YdiU of Shouchella clausii (strain KSM-K16) (Alkalihalobacillus clausii).